Reading from the N-terminus, the 522-residue chain is Tryptophan 2-halogenase (522 aa).

Residues Ala17, Glu36, Arg42, His44, Ile45, Ser48, Arg103, Ile127, and Asp296 each coordinate FAD. Positions 307 and 308 each coordinate chloride. Val309 lines the FAD pocket.

This sequence belongs to the flavin-dependent halogenase family.

Functionally, involved in the incorporation of a chlorinated tryptophan residue into halogenated forms of the secondary metabolites called chondramides. The polypeptide is Tryptophan 2-halogenase (Chondromyces crocatus).